Here is a 340-residue protein sequence, read N- to C-terminus: Ephrin-B3 (340 aa).

A signal peptide spans 1–27 (MGPPHSGPGGVRVGALLLLGVLGLVSG). Positions 28-167 (LSLEPVYWNS…TRGMKVLLRV (140 aa)) constitute an Ephrin RBD domain. Topologically, residues 28–226 (LSLEPVYWNS…EGPLPPPSMP (199 aa)) are extracellular. 2 disulfide bridges follow: C62–C104 and C92–C156. The segment at 168–225 (GQSPRGGAVPRKPVSEMPMERDRGAAHSLEPGKENLPGDPTSNATSRGAEGPLPPPSM) is disordered. The segment covering 185 to 200 (PMERDRGAAHSLEPGK) has biased composition (basic and acidic residues). N210 carries an N-linked (GlcNAc...) asparagine glycan. The helical transmembrane segment at 227-247 (AVAGAAGGLALLLLGVAGAGG) threads the bilayer. Over 248–340 (AMCWRRRRAK…QSPPNIYYKV (93 aa)) the chain is Cytoplasmic. The segment at 254 to 298 (RRAKPSESRHPGPGSFGRGGSLGLGGGGGMGPREAEPGELGIALR) is disordered. Residues 267 to 284 (GSFGRGGSLGLGGGGGMG) show a composition bias toward gly residues. R271 carries the post-translational modification Omega-N-methylarginine. S274 bears the Phosphoserine mark. The PDZ-binding motif lies at 338 to 340 (YKV).

This sequence belongs to the ephrin family. As to quaternary structure, interacts with GRIP1 and GRIP2. (Microbial infection) Interacts with nipah virus and hendra virus glycoprotein. In terms of tissue distribution, highly expressed in brain; expressed in embryonic floor plate, roof plate and hindbrain segments.

It is found in the membrane. Its function is as follows. Cell surface transmembrane ligand for Eph receptors, a family of receptor tyrosine kinases which are crucial for migration, repulsion and adhesion during neuronal, vascular and epithelial development. Binds promiscuously Eph receptors residing on adjacent cells, leading to contact-dependent bidirectional signaling into neighboring cells. The signaling pathway downstream of the receptor is referred to as forward signaling while the signaling pathway downstream of the ephrin ligand is referred to as reverse signaling. May play a pivotal role in forebrain function. Binds to, and induce the collapse of, commissural axons/growth cones in vitro. May play a role in constraining the orientation of longitudinally projecting axons. Functionally, (Microbial infection) Acts as a receptor for nipah virus and hendra virus. This Homo sapiens (Human) protein is Ephrin-B3 (EFNB3).